The chain runs to 384 residues: Putative F-box/kelch-repeat protein At3g27910 (384 aa).

Positions 27-79 constitute an F-box domain; the sequence is SPTSLPLPDEIIVNCFAYIPRCDYPSLSLVSKTFNRLITSIELNIVRSLFQRT. 4 Kelch repeats span residues 138-184, 185-235, 237-274, and 275-323; these read KIYV…IVDG, KIYV…VMNK, IYIM…VIDN, and MLYT…MANH.

The chain is Putative F-box/kelch-repeat protein At3g27910 from Arabidopsis thaliana (Mouse-ear cress).